A 787-amino-acid polypeptide reads, in one-letter code: Protocadherin beta-15 (787 aa).

Residues M1 to A26 form the signal peptide. The Extracellular segment spans residues G27 to L690. Cadherin domains follow at residues V35–F133, M138–F242, Y247–L347, L352–F451, and Y456–V561. N418 carries an N-linked (GlcNAc...) asparagine glycan. N567 carries N-linked (GlcNAc...) asparagine glycosylation. A Cadherin 6 domain is found at G568–L671. The chain crosses the membrane as a helical span at residues V691–V711. Residues R712–E787 are Cytoplasmic-facing.

The protein localises to the cell membrane. In terms of biological role, potential calcium-dependent cell-adhesion protein. May be involved in the establishment and maintenance of specific neuronal connections in the brain. This is Protocadherin beta-15 (PCDHB15) from Homo sapiens (Human).